Here is a 762-residue protein sequence, read N- to C-terminus: MASLLQDQLTTDQDLLLMQEGMPMRKVRSKSWKKLRYFRLQNDGMTVWHARQARGSAKPSFSISDVETIRNGHDSELLRSLAEELPLEQGFTIVFHGRRSNLDLMANSVEEAQIWMRGLQLLVDLVTSMDHQERLDQWLSDWFQRGDKNQDGKMSFQEVQRLLHLMNVEMDQEYAFSLFQAADTSQSGTLEGEEFVQFYKALTKRAEVQELFESFSADGQKLTLLEFLDFLQEEQKERDCTSELALELIDRYEPSDSGKLRHVLSMDGFLSYLCSKDGDIFNPACLPIYQDMTQPLNHYFICSSHNTYLVGDQLCGQSSVEGYIRALKRGCRCVEVDVWDGPSGEPVVYHGHTLTSRILFKDVVATVAQYAFQTSDYPVILSLETHCSWEQQQTMARHLTEILGEQLLSTTLDGVLPTQLPSPEELRRKILVKGKKLTLEEDLEYEEEEAEPELEESELALESQFETEPEPQEQNLQNKDKKKKSKPILCPALSSLVIYLKSVSFRSFTHSKEHYHFYEISSFSETKAKRLIKEAGNEFVQHNTWQLSRVYPSGLRTDSSNYNPQELWNAGCQMVAMNMQTAGLEMDICDGHFRQNGGCGYVLKPDFLRDIQSSFHPEKPISPFKAQTLLIQVISGQQLPKVDKTKEGSIVDPLVKVQIFGVRLDTARQETNYVENNGFNPYWGQTLCFRVLVPELAMLRFVVMDYDWKSRNDFIGQYTLPWTCMQQGYRHIHLLSKDGISLRPASIFVYICIQEGLEGDES.

One can recognise a PH domain in the interval 16 to 124 (LLMQEGMPMR…WMRGLQLLVD (109 aa)). The segment at 26–53 (KVRSKSWKKLRYFRLQNDGMTVWHARQA) is substrate binding. 3 EF-hand domains span residues 134–169 (RLDQWLSDWFQRGDKNQDGKMSFQEVQRLLHLMNVE), 170–205 (MDQEYAFSLFQAADTSQSGTLEGEEFVQFYKALTKR), and 206–237 (AEVQELFESFSADGQKLTLLEFLDFLQEEQKE). Ca(2+) contacts are provided by Asp147, Asn149, Asp151, Lys153, Glu158, Asp183, Ser185, Ser187, Thr189, and Glu194. The short motif at 213 to 243 (ESFSADGQKLTLLEFLDFLQEEQKERDCTSE) is the GBA element. The PI-PLC X-box domain maps to 290-435 (QDMTQPLNHY…LRRKILVKGK (146 aa)). His305 is a catalytic residue. Asn306, Glu335, and Asp337 together coordinate Ca(2+). His350 is a catalytic residue. Position 384 (Glu384) interacts with Ca(2+). 2 residues coordinate substrate: Lys433 and Lys435. The span at 443 to 471 (LEYEEEEAEPELEESELALESQFETEPEP) shows a compositional bias: acidic residues. Residues 443-483 (LEYEEEEAEPELEESELALESQFETEPEPQEQNLQNKDKKK) are disordered. Ser457 is subject to Phosphoserine. The 117-residue stretch at 493 to 609 (LSSLVIYLKS…GYVLKPDFLR (117 aa)) folds into the PI-PLC Y-box domain. Residues Ser522 and Arg549 each contribute to the substrate site. Positions 609–736 (RDIQSSFHPE…QGYRHIHLLS (128 aa)) constitute a C2 domain. Ca(2+) contacts are provided by Ile650, Asp652, Asn676, Asp705, Tyr706, and Asp707. Positions 731 to 734 (HIHL) match the PDZ-binding motif.

Interacts with GRIP1. In terms of assembly, interacts (via GBA motif) with guanine nucleotide-binding protein G(i) alpha subunit GNAI3 (inactive GDP-bound form); high-affinity interaction. As to quaternary structure, interacts (via GBA motif) with guanine nucleotide-binding protein G(i) alpha subunit GNAI3 (inactive GDP-bound form); low-affinity interaction. It depends on Ca(2+) as a cofactor. Highly expressed in skeletal muscle and kidney tissues, and at moderate level in intestinal tissue. Expressed in corneal epithelial cells.

It is found in the membrane. Its subcellular location is the nucleus. The protein resides in the cytoplasm. It localises to the endoplasmic reticulum. The catalysed reaction is a 1,2-diacyl-sn-glycero-3-phospho-(1D-myo-inositol-4,5-bisphosphate) + H2O = 1D-myo-inositol 1,4,5-trisphosphate + a 1,2-diacyl-sn-glycerol + H(+). It catalyses the reaction a 1,2-diacyl-sn-glycero-3-phospho-(1D-myo-inositol) + H2O = 1D-myo-inositol 1-phosphate + a 1,2-diacyl-sn-glycerol + H(+). Its function is as follows. Hydrolyzes the phosphatidylinositol 4,5-bisphosphate (PIP2) to generate 2 second messenger molecules diacylglycerol (DAG) and inositol 1,4,5-trisphosphate (IP3). DAG mediates the activation of protein kinase C (PKC), while IP3 releases Ca(2+) from intracellular stores. Required for acrosome reaction in sperm during fertilization, probably by acting as an important enzyme for intracellular Ca(2+) mobilization in the zona pellucida-induced acrosome reaction. May play a role in cell growth. Modulates the liver regeneration in cooperation with nuclear PKC. Overexpression up-regulates the Erk signaling pathway and proliferation. Functionally, acts as a non-receptor guanine nucleotide exchange factor which binds to and activates guanine nucleotide-binding protein (G-protein) alpha subunit GNAI3. The chain is 1-phosphatidylinositol 4,5-bisphosphate phosphodiesterase delta-4 from Homo sapiens (Human).